We begin with the raw amino-acid sequence, 171 residues long: S-ribosylhomocysteine lyase (171 aa).

The Fe cation site is built by histidine 54, histidine 58, and cysteine 128.

This sequence belongs to the LuxS family. Homodimer. Requires Fe cation as cofactor.

The catalysed reaction is S-(5-deoxy-D-ribos-5-yl)-L-homocysteine = (S)-4,5-dihydroxypentane-2,3-dione + L-homocysteine. In terms of biological role, involved in the synthesis of autoinducer 2 (AI-2) which is secreted by bacteria and is used to communicate both the cell density and the metabolic potential of the environment. The regulation of gene expression in response to changes in cell density is called quorum sensing. Catalyzes the transformation of S-ribosylhomocysteine (RHC) to homocysteine (HC) and 4,5-dihydroxy-2,3-pentadione (DPD). This is S-ribosylhomocysteine lyase from Escherichia coli O157:H7.